A 308-amino-acid polypeptide reads, in one-letter code: Cytochrome b (308 aa).

4 consecutive transmembrane segments (helical) span residues phenylalanine 1–threonine 21, tryptophan 45–isoleucine 66, tryptophan 81–leucine 101, and phenylalanine 146–threonine 166. Positions 51 and 65 each coordinate heme b. The heme b site is built by histidine 150 and histidine 164. Histidine 169 is a binding site for a ubiquinone. A run of 3 helical transmembrane segments spans residues methionine 194–serine 214, leucine 256–histidine 276, and leucine 288–serine 308.

The protein belongs to the cytochrome b family. As to quaternary structure, the cytochrome bc1 complex contains 11 subunits: 3 respiratory subunits (MT-CYB, CYC1 and UQCRFS1), 2 core proteins (UQCRC1 and UQCRC2) and 6 low-molecular weight proteins (UQCRH/QCR6, UQCRB/QCR7, UQCRQ/QCR8, UQCR10/QCR9, UQCR11/QCR10 and a cleavage product of UQCRFS1). This cytochrome bc1 complex then forms a dimer. Heme b serves as cofactor.

It is found in the mitochondrion inner membrane. In terms of biological role, component of the ubiquinol-cytochrome c reductase complex (complex III or cytochrome b-c1 complex) that is part of the mitochondrial respiratory chain. The b-c1 complex mediates electron transfer from ubiquinol to cytochrome c. Contributes to the generation of a proton gradient across the mitochondrial membrane that is then used for ATP synthesis. The polypeptide is Cytochrome b (MT-CYB) (Amblyornis macgregoriae (Macgregor's bowerbird)).